The primary structure comprises 138 residues: Regulator of ribonuclease activity B (138 aa).

Residues 111–138 (WGTYFEDPNGEEGDDDDYVDEDDDGVRH) are disordered. Acidic residues predominate over residues 118–138 (PNGEEGDDDDYVDEDDDGVRH).

The protein belongs to the RraB family. Interacts with the C-terminal region of Rne.

The protein resides in the cytoplasm. Globally modulates RNA abundance by binding to RNase E (Rne) and regulating its endonucleolytic activity. Can modulate Rne action in a substrate-dependent manner by altering the composition of the degradosome. The chain is Regulator of ribonuclease activity B from Salmonella typhi.